Reading from the N-terminus, the 254-residue chain is Bacteriorhodopsin-I (254 aa).

Positions M1 to L6 are excised as a propeptide. Residue Q7 is modified to Pyrrolidone carboxylic acid. 7 helical membrane passes run E16–A36, V51–F71, Y91–A111, I116–T136, A144–F164, I185–A205, and E212–L232. K224 bears the N6-(retinylidene)lysine mark.

Belongs to the archaeal/bacterial/fungal opsin family. The covalent binding of retinal to the apoprotein, bacterioopsin, generates bacteriorhodopsin.

The protein localises to the cell membrane. Light-driven proton pump. This chain is Bacteriorhodopsin-I (bop1), found in Haloquadratum walsbyi (strain DSM 16854 / JCM 12705 / C23).